Reading from the N-terminus, the 89-residue chain is Small ribosomal subunit protein uS15 (89 aa).

The protein belongs to the universal ribosomal protein uS15 family. Part of the 30S ribosomal subunit. Forms a bridge to the 50S subunit in the 70S ribosome, contacting the 23S rRNA.

Functionally, one of the primary rRNA binding proteins, it binds directly to 16S rRNA where it helps nucleate assembly of the platform of the 30S subunit by binding and bridging several RNA helices of the 16S rRNA. Forms an intersubunit bridge (bridge B4) with the 23S rRNA of the 50S subunit in the ribosome. In Bdellovibrio bacteriovorus (strain ATCC 15356 / DSM 50701 / NCIMB 9529 / HD100), this protein is Small ribosomal subunit protein uS15.